Reading from the N-terminus, the 217-residue chain is Adenylate kinase (217 aa).

10–15 (GAGKGT) is an ATP binding site. An NMP region spans residues 30–59 (STGDMLRAAVKAGSPLGVKVKDIMASGQLV). AMP is bound by residues T31, R36, 57 to 59 (QLV), 85 to 88 (GFPR), and Q92. Residues 122 to 159 (GRRVHEASGRIYHVTHNPPKTEGVDDITGEPLVQRDDD) form an LID region. ATP contacts are provided by residues R123 and 132–133 (IY). Positions 156 and 167 each coordinate AMP. Position 202 (G202) interacts with ATP.

The protein belongs to the adenylate kinase family. In terms of assembly, monomer.

It is found in the cytoplasm. The catalysed reaction is AMP + ATP = 2 ADP. Its pathway is purine metabolism; AMP biosynthesis via salvage pathway; AMP from ADP: step 1/1. Functionally, catalyzes the reversible transfer of the terminal phosphate group between ATP and AMP. Plays an important role in cellular energy homeostasis and in adenine nucleotide metabolism. In Teredinibacter turnerae (strain ATCC 39867 / T7901), this protein is Adenylate kinase.